The chain runs to 366 residues: Isocitrate dehydrogenase [NAD] subunit alpha, mitochondrial (366 aa).

The transit peptide at 1-27 (MAGPAWISKVSRLLGAFHNPKQVTRGF) directs the protein to the mitochondrion. The residue at position 77 (K77) is an N6-succinyllysine. T101 bears the Phosphothreonine mark. Residues R115, R125, and R146 each contribute to the substrate site. Residue K223 is modified to N6-acetyllysine. 3 residues coordinate Mg(2+): D233, D257, and D261. N6-acetyllysine; alternate is present on K343. The residue at position 343 (K343) is an N6-succinyllysine; alternate. An N6-succinyllysine modification is found at K350.

This sequence belongs to the isocitrate and isopropylmalate dehydrogenases family. In terms of assembly, heterooligomer of subunits alpha (IDH3A), beta (IDH3B), and gamma (IDH3G) in the apparent ratio of 2:1:1. The heterodimer containing one IDH3A and one IDH3B subunit and the heterodimer containing one IDH3A and one IDH3G subunit assemble into a heterotetramer (which contains two subunits of IDH3A, one of IDH3B and one of IDH3G) and further into the heterooctamer. Mg(2+) serves as cofactor. Mn(2+) is required as a cofactor.

It is found in the mitochondrion. The catalysed reaction is D-threo-isocitrate + NAD(+) = 2-oxoglutarate + CO2 + NADH. With respect to regulation, the heterotetramer and the heterodimer composed of IDH3A and IDH3G subunits can be allosterically activated by citrate (CIT) or/and ADP, and the two activators can act independently or synergistically. The heterodimer composed of IDH3A and IDH3B subunits cannot be allosterically regulated and the allosteric regulation of the heterotetramer is through the IDH3G subunit and not the IDH3B subunit. The IDH3G subunit contains the allosteric site which consists of a CIT-binding site and an ADP-binding site, and the binding of CIT and ADP causes conformational changes at the allosteric site which are transmitted to the active site in the catalytic subunit (IDH3A) through a cascade of conformational changes at the heterodimer interface, leading to stabilization of the isocitrate-binding at the active site and thus activation of the enzyme. ATP can activate the heterotetramer and the heterodimer composed of IDH3A and IDH3G subunits at low concentrations but inhibits their activities at high concentrations, whereas ATP exhibits only inhibitory effect on the heterodimer composed of IDH3A and IDH3B subunits. Catalytic subunit of the enzyme which catalyzes the decarboxylation of isocitrate (ICT) into alpha-ketoglutarate. The heterodimer composed of the alpha (IDH3A) and beta (IDH3B) subunits and the heterodimer composed of the alpha (IDH3A) and gamma (IDH3G) subunits, have considerable basal activity but the full activity of the heterotetramer (containing two subunits of IDH3A, one of IDH3B and one of IDH3G) requires the assembly and cooperative function of both heterodimers. This is Isocitrate dehydrogenase [NAD] subunit alpha, mitochondrial from Pongo abelii (Sumatran orangutan).